A 188-amino-acid polypeptide reads, in one-letter code: Dual specificity protein phosphatase 18 (188 aa).

The region spanning 19–160 (GLSQITKSLY…LIHYEFQLFG (142 aa)) is the Tyrosine-protein phosphatase domain. A sufficient for mitochondrial localization region spans residues 95-141 (MKQGRTLLHCAAGVSRSAALCLAYLMKYHAMSLLDAHTWTKSCRPII). Residue Cys104 is the Phosphocysteine intermediate of the active site.

Belongs to the protein-tyrosine phosphatase family. Non-receptor class dual specificity subfamily.

Its subcellular location is the cytoplasm. The protein localises to the nucleus. It localises to the mitochondrion inner membrane. It catalyses the reaction O-phospho-L-tyrosyl-[protein] + H2O = L-tyrosyl-[protein] + phosphate. The catalysed reaction is O-phospho-L-seryl-[protein] + H2O = L-seryl-[protein] + phosphate. It carries out the reaction O-phospho-L-threonyl-[protein] + H2O = L-threonyl-[protein] + phosphate. Its function is as follows. Can dephosphorylate single and diphosphorylated synthetic MAPK peptides, with preference for the phosphotyrosine and diphosphorylated forms over phosphothreonine. In vitro, dephosphorylates p-nitrophenyl phosphate (pNPP). This Pongo abelii (Sumatran orangutan) protein is Dual specificity protein phosphatase 18 (DUSP18).